The chain runs to 417 residues: Tryptophan synthase beta chain (417 aa).

Lys-110 is subject to N6-(pyridoxal phosphate)lysine.

This sequence belongs to the TrpB family. In terms of assembly, tetramer of two alpha and two beta chains. Pyridoxal 5'-phosphate serves as cofactor.

The catalysed reaction is (1S,2R)-1-C-(indol-3-yl)glycerol 3-phosphate + L-serine = D-glyceraldehyde 3-phosphate + L-tryptophan + H2O. It participates in amino-acid biosynthesis; L-tryptophan biosynthesis; L-tryptophan from chorismate: step 5/5. In terms of biological role, the beta subunit is responsible for the synthesis of L-tryptophan from indole and L-serine. The protein is Tryptophan synthase beta chain of Prochlorococcus marinus (strain NATL1A).